The primary structure comprises 189 residues: HTH-type transcriptional repressor LfrR (189 aa).

The region spanning 12-70 (ERTRRAILDAAMLVLADHPTAALGDIAAAAGVGRSTVHRYYPERTDLLRALARHVHDLS) is the HTH tetR-type domain. Residues 33 to 52 (ALGDIAAAAGVGRSTVHRYY) constitute a DNA-binding region (H-T-H motif). Residues 70 to 71 (SN) form a proflavine binding region.

Homodimer. Forms a structurally asymmetric homodimer exhibiting local unfolding and a blocked drug-binding site.

Its activity is regulated as follows. Repressor activity is regulated by binding of different substrates of the LfrA multidrug efflux pump, such as acriflavine, proflavine, ethidium bromide and rhodamine 123. Binding of these ligands causes the dissociation of LfrR from the promoter, inducing lfrA expression. Functionally, represses the transcription of the lfrRA operon by binding directly to the promoter region of lfrR-lfrA. Binds specifically to a 143-bp region upstream of the lfrR gene. This chain is HTH-type transcriptional repressor LfrR, found in Mycolicibacterium smegmatis (strain ATCC 700084 / mc(2)155) (Mycobacterium smegmatis).